Here is a 595-residue protein sequence, read N- to C-terminus: DNA mismatch repair protein MutL (595 aa).

Belongs to the DNA mismatch repair MutL/HexB family.

In terms of biological role, this protein is involved in the repair of mismatches in DNA. It is required for dam-dependent methyl-directed DNA mismatch repair. May act as a 'molecular matchmaker', a protein that promotes the formation of a stable complex between two or more DNA-binding proteins in an ATP-dependent manner without itself being part of a final effector complex. The sequence is that of DNA mismatch repair protein MutL from Endomicrobium trichonymphae.